The chain runs to 270 residues: Interleukin-1 beta (270 aa).

A propeptide spanning residues 1–118 is cleaved from the precursor; it reads MARVPEPTSE…KCDDNAFVHD (118 aa).

This sequence belongs to the IL-1 family. In terms of assembly, monomer. In its precursor form, weakly interacts with full-length MEFV; the mature cytokine does not interact at all. Interacts with integrins ITGAV:ITGBV and ITGA5:ITGB1; integrin-binding is required for IL1B signaling. Interacts with cargo receptor TMED10; the interaction is direct and is required for the secretion of IL1B mature form. Interacts with HSP90AB1; the interaction facilitates cargo translocation into the ERGIC. Interacts with HSP90B1; the interaction facilitates cargo translocation into the ERGIC.

The protein resides in the cytoplasm. The protein localises to the cytosol. It is found in the secreted. Its subcellular location is the lysosome. It localises to the extracellular exosome. Potent pro-inflammatory cytokine. Initially discovered as the major endogenous pyrogen, induces prostaglandin synthesis, neutrophil influx and activation, T-cell activation and cytokine production, B-cell activation and antibody production, and fibroblast proliferation and collagen production. Promotes Th17 differentiation of T-cells. Synergizes with IL12/interleukin-12 to induce IFNG synthesis from T-helper 1 (Th1) cells. Plays a role in angiogenesis by inducing VEGF production synergistically with TNF and IL6. Involved in transduction of inflammation downstream of pyroptosis: its mature form is specifically released in the extracellular milieu by passing through the gasdermin-D (GSDMD) pore. This chain is Interleukin-1 beta (IL1B), found in Mustela putorius furo (European domestic ferret).